Here is a 93-residue protein sequence, read N- to C-terminus: Small ribosomal subunit protein bS16 (93 aa).

The protein belongs to the bacterial ribosomal protein bS16 family.

The protein is Small ribosomal subunit protein bS16 of Opitutus terrae (strain DSM 11246 / JCM 15787 / PB90-1).